Reading from the N-terminus, the 179-residue chain is Small ribosomal subunit protein uS7 (179 aa).

Belongs to the universal ribosomal protein uS7 family. In terms of assembly, part of the 30S ribosomal subunit. Contacts proteins S9 and S11.

Its function is as follows. One of the primary rRNA binding proteins, it binds directly to 16S rRNA where it nucleates assembly of the head domain of the 30S subunit. Is located at the subunit interface close to the decoding center, probably blocks exit of the E-site tRNA. This chain is Small ribosomal subunit protein uS7, found in Shigella flexneri serotype 5b (strain 8401).